Consider the following 139-residue polypeptide: Large ribosomal subunit protein uL16 (139 aa).

The span at 1-13 (MLQPARRKYRKEQ) shows a compositional bias: basic residues. The disordered stretch occupies residues 1–23 (MLQPARRKYRKEQKGRNTGISHS).

It belongs to the universal ribosomal protein uL16 family. Part of the 50S ribosomal subunit.

Its function is as follows. Binds 23S rRNA and is also seen to make contacts with the A and possibly P site tRNAs. This is Large ribosomal subunit protein uL16 from Herminiimonas arsenicoxydans.